A 1839-amino-acid chain; its full sequence is Nuclear pore complex protein DDB_G0274915 (1839 aa).

2 stretches are compositionally biased toward polar residues: residues 1–27 (MNGR…NTIN) and 35–54 (NGSL…QTNK). 10 disordered regions span residues 1–54 (MNGR…QTNK), 78–150 (DESS…ISDD), 325–367 (KQFD…PNAD), 480–568 (PLNK…FSTT), 589–636 (TTIA…GGGV), 657–705 (VSTS…DVPG), 739–810 (TTTT…DSKT), 818–837 (PTTE…SSLF), 846–1106 (TTPS…FSSN), and 1129–1839 (TTAT…AKKK). Low complexity predominate over residues 80–90 (SSSSSSSSSSS). Residues 91 to 101 (YDDGNNIPQKG) show a composition bias toward polar residues. Composition is skewed to low complexity over residues 102–148 (SSTT…INIS) and 329–343 (DNNN…SIYN). Residues 344 to 354 (RQSIYSPNSKI) show a composition bias toward polar residues. 2 stretches are compositionally biased toward low complexity: residues 495–568 (TYAT…FSTT) and 589–607 (TTIA…SSSS). A compositionally biased stretch (polar residues) spans 616–628 (MFTSDSNKSNLFS). Low complexity-rich tracts occupy residues 658-671 (STST…SKSS) and 739-760 (TTTT…TTDK). A compositionally biased stretch (basic and acidic residues) spans 761–773 (SSADKSSADKSST). 3 stretches are compositionally biased toward low complexity: residues 774–803 (DKST…TTTT), 827–837 (PTTSLTSSSLF), and 846–871 (TTPS…NTTT). Composition is skewed to acidic residues over residues 896–923 (ESDE…EAEE) and 944–958 (LEAE…DSDE). Composition is skewed to low complexity over residues 1005–1021 (GSSL…SFLT) and 1046–1060 (SSSS…IPTT). The segment covering 1061–1070 (SKKEKIDDKP) has biased composition (basic and acidic residues). Residues 1071 to 1092 (STTTTTTTTSLFGSTTTSGLFS) are compositionally biased toward low complexity. Positions 1093 to 1106 (NPSTTSTGSLFSSN) are enriched in polar residues. 2 stretches are compositionally biased toward low complexity: residues 1129–1242 (TTAT…FGST) and 1250–1292 (ATTT…GLFG). Residues 1293–1310 (ASSSTTPSTGLFGSATTP) show a composition bias toward polar residues. Composition is skewed to low complexity over residues 1311–1384 (STGL…TTPP) and 1397–1498 (LFGT…TTAT). Residues 1507–1521 (TAPSTGLFGSTTATN) show a composition bias toward polar residues. The span at 1522–1673 (PSTGLFGSTT…SSTPFGASPF (152 aa)) shows a compositional bias: low complexity. Residues 1676-1708 (PTSTSSPPFGAPTSASSTPFGAPQISTSSSTNL) are compositionally biased toward polar residues. Residues 1712-1810 (ASSSTAAPSF…PFGSTPSTAP (99 aa)) show a composition bias toward low complexity.

This Dictyostelium discoideum (Social amoeba) protein is Nuclear pore complex protein DDB_G0274915.